The sequence spans 242 residues: NAD(P)H-hydrate epimerase (242 aa).

The 211-residue stretch at 11–221 (AKALDAELMS…KVITKKFNLS (211 aa)) folds into the YjeF N-terminal domain. A (6S)-NADPHX-binding site is contributed by 61–65 (NNGGD). K(+) is bound by residues asparagine 62 and aspartate 128. (6S)-NADPHX is bound by residues 132–138 (GFSFKGP) and aspartate 161. Position 164 (serine 164) interacts with K(+).

Belongs to the NnrE/AIBP family. It depends on K(+) as a cofactor.

The protein localises to the cytoplasm. The protein resides in the mitochondrion. Its subcellular location is the nucleus. It carries out the reaction (6R)-NADHX = (6S)-NADHX. It catalyses the reaction (6R)-NADPHX = (6S)-NADPHX. Functionally, catalyzes the epimerization of the S- and R-forms of NAD(P)HX, a damaged form of NAD(P)H that is a result of enzymatic or heat-dependent hydration. This is a prerequisite for the S-specific NAD(P)H-hydrate dehydratase to allow the repair of both epimers of NAD(P)HX. May have a role in meiosis. This Schizosaccharomyces pombe (strain 972 / ATCC 24843) (Fission yeast) protein is NAD(P)H-hydrate epimerase (mug182).